The primary structure comprises 1442 residues: Chitin synthase regulator SKT5 (1442 aa).

Disordered stretches follow at residues 1 to 54 (MTHP…SPTL) and 72 to 117 (LALK…RHLQ). The span at 12-25 (NGKEPEKEEPRCVH) shows a compositional bias: basic and acidic residues. The segment covering 39-53 (KSSSAITNENVSSPT) has biased composition (polar residues). The span at 75-99 (KEPENGKNKHPDSEQDDGDMKEQRS) shows a compositional bias: basic and acidic residues. Sel1-like repeat units lie at residues 198-236 (VESQYLAGDCCMNGYGMSKGRPDLGLAYSYFVQAGKRGH), 237-272 (PDAAYRAGTCYEKGWGCRRDPAKAVQFYKMAASRKH), 273-309 (PGAQYRLGTAELNGELGLKRLAREGVKWLKRSAENAT), 313-350 (PHALHELALLHEKGIYNVLFVDNEYSCELLAQAVEMGY), 351-387 (APSAYKLGVNYEYGRMGCPQDSGLSIHMYNIAAQQNH), 388-425 (KEACFALTSWYLVGVPGILPQSDTEAYLWAKRAAEQGL), and 426-461 (AKAEYACGYFCENGIGTPRDLGEAKGWYQRAVEHGD). The segment at 550-1402 (EKPKTATPTS…FSTPDSSSSK (853 aa)) is disordered. A compositionally biased stretch (pro residues) spans 605–617 (PKPPTPPPPPPPE). The span at 633-648 (FKSRLLRLGKMGKIRK) shows a compositional bias: basic residues. The segment covering 747 to 758 (GPSSAAGADGAP) has biased composition (low complexity). Basic and acidic residues-rich tracts occupy residues 762 to 804 (GEPK…KSEK), 821 to 840 (GSDKPGSEDKKNQEVPKPSD), and 859 to 875 (RPDEKNSSLVERSKDSE). Low complexity predominate over residues 876–891 (STSPSSPKPTTGSAEP). 3 stretches are compositionally biased toward pro residues: residues 964–977 (PFPPGARPGMPPNA), 1139–1158 (RPGPRPFSPTFPSPAGPSRP), and 1200–1220 (AMQPGRPPSPSSPFGRPPTGP). Positions 1232–1243 (PSQSSMHQSGNG) are enriched in polar residues. The segment covering 1271–1282 (PRPPRPTSPPPF) has biased composition (pro residues). Low complexity predominate over residues 1295 to 1305 (RGVMPPGSGPS). Pro residues-rich tracts occupy residues 1306–1322 (MRPPQPPAIIPPPPRSP) and 1371–1386 (DRPPFAPPTHVTPPKT). Positions 1392–1402 (GFSTPDSSSSK) are enriched in polar residues.

Belongs to the SKT5 family.

Its subcellular location is the cell membrane. Activator of the chitin synthase CHS3 which polymerizes chitin, a structural polymer of the fungal cell wall. This is Chitin synthase regulator SKT5 from Malassezia restricta (strain ATCC 96810 / NBRC 103918 / CBS 7877) (Seborrheic dermatitis infection agent).